A 264-amino-acid polypeptide reads, in one-letter code: UPF0162 protein PM0557 (264 aa).

The protein belongs to the UPF0162 family.

The chain is UPF0162 protein PM0557 from Pasteurella multocida (strain Pm70).